The sequence spans 272 residues: AA9 family lytic polysaccharide monooxygenase G (272 aa).

The signal sequence occupies residues 1 to 22; that stretch reads MKGAGSASFLLTLLSTITRTSA. Position 23 (His23) interacts with Cu(2+). N-linked (GlcNAc...) asparagine glycosylation is present at Asn60. 2 disulfide bridges follow: Cys78/Cys202 and Cys121/Cys125. A Cu(2+)-binding site is contributed by His110. Residues His188 and Gln197 each coordinate O2. Tyr199 contributes to the Cu(2+) binding site.

This sequence belongs to the polysaccharide monooxygenase AA9 family. Requires Cu(2+) as cofactor.

The protein localises to the secreted. It catalyses the reaction [(1-&gt;4)-beta-D-glucosyl]n+m + reduced acceptor + O2 = 4-dehydro-beta-D-glucosyl-[(1-&gt;4)-beta-D-glucosyl]n-1 + [(1-&gt;4)-beta-D-glucosyl]m + acceptor + H2O.. Its function is as follows. Lytic polysaccharide monooxygenase (LPMO) that depolymerizes crystalline and amorphous polysaccharides via the oxidation of scissile alpha- or beta-(1-4)-glycosidic bonds, yielding C1 or C4 oxidation products. Catalysis by LPMOs requires the reduction of the active-site copper from Cu(II) to Cu(I) by a reducing agent and H(2)O(2) or O(2) as a cosubstrate. Acts preferentially on crystalline regions of cellulose such as highly crystalline algae cellulose. This Emericella nidulans (strain FGSC A4 / ATCC 38163 / CBS 112.46 / NRRL 194 / M139) (Aspergillus nidulans) protein is AA9 family lytic polysaccharide monooxygenase G.